A 937-amino-acid polypeptide reads, in one-letter code: Isoleucine--tRNA ligase (937 aa).

Residues 57 to 67 (PYANGPIHMGH) carry the 'HIGH' region motif. Residue Glu556 coordinates L-isoleucyl-5'-AMP. A 'KMSKS' region motif is present at residues 597-601 (KMSKS). Lys600 provides a ligand contact to ATP. 4 residues coordinate Zn(2+): Cys895, Cys898, Cys915, and Cys918.

Belongs to the class-I aminoacyl-tRNA synthetase family. IleS type 1 subfamily. As to quaternary structure, monomer. The cofactor is Zn(2+).

It localises to the cytoplasm. It catalyses the reaction tRNA(Ile) + L-isoleucine + ATP = L-isoleucyl-tRNA(Ile) + AMP + diphosphate. Functionally, catalyzes the attachment of isoleucine to tRNA(Ile). As IleRS can inadvertently accommodate and process structurally similar amino acids such as valine, to avoid such errors it has two additional distinct tRNA(Ile)-dependent editing activities. One activity is designated as 'pretransfer' editing and involves the hydrolysis of activated Val-AMP. The other activity is designated 'posttransfer' editing and involves deacylation of mischarged Val-tRNA(Ile). This is Isoleucine--tRNA ligase from Levilactobacillus brevis (strain ATCC 367 / BCRC 12310 / CIP 105137 / JCM 1170 / LMG 11437 / NCIMB 947 / NCTC 947) (Lactobacillus brevis).